A 383-amino-acid polypeptide reads, in one-letter code: D-alanine--D-alanine ligase (383 aa).

The region spanning 169-373 is the ATP-grasp domain; that stretch reads KALLRAAGLP…YPQLVDRLVR (205 aa). Residue 196–251 coordinates ATP; sequence QERLGLPVFVKPARGGSSIGISRVEAWADLDTAIKAARASDPKVLVESAIVGREIE. The Mg(2+) site is built by D327, E340, and N342.

The protein belongs to the D-alanine--D-alanine ligase family. Mg(2+) serves as cofactor. Requires Mn(2+) as cofactor.

Its subcellular location is the cytoplasm. The enzyme catalyses 2 D-alanine + ATP = D-alanyl-D-alanine + ADP + phosphate + H(+). Its pathway is cell wall biogenesis; peptidoglycan biosynthesis. Functionally, cell wall formation. The polypeptide is D-alanine--D-alanine ligase (Frankia casuarinae (strain DSM 45818 / CECT 9043 / HFP020203 / CcI3)).